Consider the following 384-residue polypeptide: Bifunctional enzyme IspD/IspF (384 aa).

2-C-methyl-D-erythritol 4-phosphate cytidylyltransferase regions lie at residues 1–227 (MAKV…EGEQ) and 1–228 (MAKV…GEQR). A 2-C-methyl-D-erythritol 2,4-cyclodiphosphate synthase region spans residues 228-384 (RIGSGFDVHR…QATALITLPF (157 aa)). The a divalent metal cation site is built by aspartate 234 and histidine 236. Residues 234-236 (DVH) and 260-261 (HS) contribute to the 4-CDP-2-C-methyl-D-erythritol 2-phosphate site. Histidine 268 contributes to the a divalent metal cation binding site. 4-CDP-2-C-methyl-D-erythritol 2-phosphate contacts are provided by residues 282–284 (DIG), 358–361 (TTTE), phenylalanine 365, and arginine 368.

This sequence in the N-terminal section; belongs to the IspD/TarI cytidylyltransferase family. IspD subfamily. It in the C-terminal section; belongs to the IspF family. It depends on a divalent metal cation as a cofactor.

The enzyme catalyses 2-C-methyl-D-erythritol 4-phosphate + CTP + H(+) = 4-CDP-2-C-methyl-D-erythritol + diphosphate. The catalysed reaction is 4-CDP-2-C-methyl-D-erythritol 2-phosphate = 2-C-methyl-D-erythritol 2,4-cyclic diphosphate + CMP. The protein operates within isoprenoid biosynthesis; isopentenyl diphosphate biosynthesis via DXP pathway; isopentenyl diphosphate from 1-deoxy-D-xylulose 5-phosphate: step 2/6. It functions in the pathway isoprenoid biosynthesis; isopentenyl diphosphate biosynthesis via DXP pathway; isopentenyl diphosphate from 1-deoxy-D-xylulose 5-phosphate: step 4/6. Functionally, bifunctional enzyme that catalyzes the formation of 4-diphosphocytidyl-2-C-methyl-D-erythritol from CTP and 2-C-methyl-D-erythritol 4-phosphate (MEP) (IspD), and catalyzes the conversion of 4-diphosphocytidyl-2-C-methyl-D-erythritol 2-phosphate (CDP-ME2P) to 2-C-methyl-D-erythritol 2,4-cyclodiphosphate (ME-CPP) with a corresponding release of cytidine 5-monophosphate (CMP) (IspF). This chain is Bifunctional enzyme IspD/IspF, found in Rhodospirillum rubrum (strain ATCC 11170 / ATH 1.1.1 / DSM 467 / LMG 4362 / NCIMB 8255 / S1).